We begin with the raw amino-acid sequence, 400 residues long: Aminomethyltransferase, mitochondrial (400 aa).

Substrate is bound by residues E221, R250, and Y397.

This sequence belongs to the GcvT family. Component of the glycine decarboxylase complex (GDC), which is composed of four proteins: P, T, L and H.

The protein localises to the mitochondrion. It catalyses the reaction N(6)-[(R)-S(8)-aminomethyldihydrolipoyl]-L-lysyl-[protein] + (6S)-5,6,7,8-tetrahydrofolate = N(6)-[(R)-dihydrolipoyl]-L-lysyl-[protein] + (6R)-5,10-methylene-5,6,7,8-tetrahydrofolate + NH4(+). Its function is as follows. The glycine cleavage system (glycine decarboxylase complex) catalyzes the degradation of glycine. The protein is Aminomethyltransferase, mitochondrial (GCV1) of Saccharomyces cerevisiae (strain ATCC 204508 / S288c) (Baker's yeast).